The sequence spans 244 residues: NAD-dependent protein deacetylase (244 aa).

Positions 1-244 (MTGEQLAHWI…LSAVQRAVMP (244 aa)) constitute a Deacetylase sirtuin-type domain. NAD(+)-binding residues include Ala22, Thr26, Phe33, Arg34, Gln103, Ile105, Asp106, and His121. Phe33 contacts nicotinamide. 2 residues coordinate nicotinamide: Ile105 and Asp106. His121 serves as the catalytic Proton acceptor. Zn(2+) is bound by residues Cys129, Cys132, Cys150, and Cys152. NAD(+) contacts are provided by Thr190, Ser191, Asn213, and Leu231.

Belongs to the sirtuin family. Class U subfamily. Zn(2+) is required as a cofactor.

It localises to the cytoplasm. It carries out the reaction N(6)-acetyl-L-lysyl-[protein] + NAD(+) + H2O = 2''-O-acetyl-ADP-D-ribose + nicotinamide + L-lysyl-[protein]. NAD-dependent protein deacetylase which modulates the activities of several enzymes which are inactive in their acetylated form. This is NAD-dependent protein deacetylase from Cutibacterium acnes (strain DSM 16379 / KPA171202) (Propionibacterium acnes).